A 763-amino-acid chain; its full sequence is Xaa-Pro dipeptidyl-peptidase (763 aa).

Residues Ser349, Asp469, and His499 each act as charge relay system in the active site.

The protein belongs to the peptidase S15 family. In terms of assembly, homodimer.

It is found in the cytoplasm. It carries out the reaction Hydrolyzes Xaa-Pro-|- bonds to release unblocked, N-terminal dipeptides from substrates including Ala-Pro-|-p-nitroanilide and (sequentially) Tyr-Pro-|-Phe-Pro-|-Gly-Pro-|-Ile.. Removes N-terminal dipeptides sequentially from polypeptides having unsubstituted N-termini provided that the penultimate residue is proline. The sequence is that of Xaa-Pro dipeptidyl-peptidase from Streptococcus macedonicus (Streptococcus gallolyticus macedonicus).